The chain runs to 83 residues: Cytochrome b559 subunit alpha (83 aa).

A helical transmembrane segment spans residues 21-35 (VIHSITIPSLFIAGW). His-23 is a binding site for heme.

This sequence belongs to the PsbE/PsbF family. As to quaternary structure, heterodimer of an alpha subunit and a beta subunit. PSII is composed of 1 copy each of membrane proteins PsbA, PsbB, PsbC, PsbD, PsbE, PsbF, PsbH, PsbI, PsbJ, PsbK, PsbL, PsbM, PsbT, PsbX, PsbY, PsbZ, Psb30/Ycf12, at least 3 peripheral proteins of the oxygen-evolving complex and a large number of cofactors. It forms dimeric complexes. Heme b serves as cofactor.

Its subcellular location is the plastid. The protein resides in the chloroplast thylakoid membrane. This b-type cytochrome is tightly associated with the reaction center of photosystem II (PSII). PSII is a light-driven water:plastoquinone oxidoreductase that uses light energy to abstract electrons from H(2)O, generating O(2) and a proton gradient subsequently used for ATP formation. It consists of a core antenna complex that captures photons, and an electron transfer chain that converts photonic excitation into a charge separation. This chain is Cytochrome b559 subunit alpha, found in Huperzia lucidula (Shining clubmoss).